A 239-amino-acid polypeptide reads, in one-letter code: tRNA (guanine-N(7)-)-methyltransferase (239 aa).

Residues glutamate 69, glutamate 94, aspartate 121, and aspartate 144 each coordinate S-adenosyl-L-methionine. Aspartate 144 is a catalytic residue. Lysine 148 provides a ligand contact to substrate. The segment at 150 to 155 (RHNKRR) is interaction with RNA. Residues aspartate 180 and 217-220 (TKFE) each bind substrate.

This sequence belongs to the class I-like SAM-binding methyltransferase superfamily. TrmB family. In terms of assembly, monomer.

It catalyses the reaction guanosine(46) in tRNA + S-adenosyl-L-methionine = N(7)-methylguanosine(46) in tRNA + S-adenosyl-L-homocysteine. The protein operates within tRNA modification; N(7)-methylguanine-tRNA biosynthesis. Functionally, catalyzes the formation of N(7)-methylguanine at position 46 (m7G46) in tRNA. The chain is tRNA (guanine-N(7)-)-methyltransferase from Klebsiella pneumoniae subsp. pneumoniae (strain ATCC 700721 / MGH 78578).